The primary structure comprises 341 residues: MASSRTLGTFRLPPLPTIREIIKLFRLQAVKQLSQNFLLDLRLTDKIVRKAGNLTNAYVYEVGPGPGGITRSILNAGVAELLVVEKDSRFIPGLQMLSDAAPGKLRIVHGDVLTFKIERAFPESLKRQWEDDPPNVHIIGNLPFSVSTPLIIKWLENVSQRNGPFAYGRTRMMLTFQKEVAERLTATTGSKQRSRLSIMAQYLCDVQHILTIPGQAFVPKPEVDSGVVHFTPLTRPRIKQPFKLVEKVVQNAFQFRRKYCHRGLGMLFPEARRLESTGKLLELADVDPTLRPTQLTVSHFKSLCDVYRKMCDEDPHLFAYNFREELRQKSKKEDDKQSCRL.

Residues 1-27 constitute a mitochondrion transit peptide; the sequence is MASSRTLGTFRLPPLPTIREIIKLFRL. S-adenosyl-L-methionine-binding residues include L38, G63, E85, K86, D111, V112, and N141.

Belongs to the class I-like SAM-binding methyltransferase superfamily. rRNA adenine N(6)-methyltransferase family. KsgA subfamily. In terms of assembly, interacts with mitochondrial RNA polymerase POLRMT. Interacts with TFAM. Bound to the maturing mtSSU until the late stages of assembly.

Its subcellular location is the mitochondrion. It catalyses the reaction adenosine(N)/adenosine(N+1) in rRNA + 4 S-adenosyl-L-methionine = N(6)-dimethyladenosine(N)/N(6)-dimethyladenosine(N+1) in rRNA + 4 S-adenosyl-L-homocysteine + 4 H(+). Functionally, mitochondrial methyltransferase which uses S-adenosyl methionine to dimethylate two highly conserved adjacent adenosine residues (A1583 and A1584) within the loop of helix 45 at the 3-prime end of 12S rRNA, thereby regulating the assembly or stability of the small subunit of the mitochondrial ribosome. Also required for basal transcription of mitochondrial DNA, probably via its interaction with POLRMT and TFAM. Stimulates transcription independently of the methyltransferase activity. The polypeptide is Mitochondrial dimethyladenosine transferase 1 (TFB1M) (Bos taurus (Bovine)).